The chain runs to 1384 residues: DNA-directed RNA polymerase subunit beta' (1384 aa).

Zn(2+)-binding residues include cysteine 81, cysteine 83, cysteine 96, and cysteine 99. Mg(2+) is bound by residues aspartate 472, aspartate 474, and aspartate 476.

The protein belongs to the RNA polymerase beta' chain family. The RNAP catalytic core consists of 2 alpha, 1 beta, 1 beta' and 1 omega subunit. When a sigma factor is associated with the core the holoenzyme is formed, which can initiate transcription. Mg(2+) is required as a cofactor. The cofactor is Zn(2+).

The catalysed reaction is RNA(n) + a ribonucleoside 5'-triphosphate = RNA(n+1) + diphosphate. Its function is as follows. DNA-dependent RNA polymerase catalyzes the transcription of DNA into RNA using the four ribonucleoside triphosphates as substrates. The sequence is that of DNA-directed RNA polymerase subunit beta' from Opitutus terrae (strain DSM 11246 / JCM 15787 / PB90-1).